Reading from the N-terminus, the 327-residue chain is Malate dehydrogenase (327 aa).

Residue 12–18 (GAAGQIG) coordinates NAD(+). Substrate is bound by residues R93 and R99. NAD(+)-binding positions include N106, Q113, and 130-132 (VGN). The substrate site is built by N132 and R163. The active-site Proton acceptor is H188.

The protein belongs to the LDH/MDH superfamily. MDH type 2 family.

The enzyme catalyses (S)-malate + NAD(+) = oxaloacetate + NADH + H(+). In terms of biological role, catalyzes the reversible oxidation of malate to oxaloacetate. This Cupriavidus pinatubonensis (strain JMP 134 / LMG 1197) (Cupriavidus necator (strain JMP 134)) protein is Malate dehydrogenase.